We begin with the raw amino-acid sequence, 129 residues long: Large ribosomal subunit protein uL22 (129 aa).

The protein belongs to the universal ribosomal protein uL22 family. Part of the 50S ribosomal subunit.

In terms of biological role, this protein binds specifically to 23S rRNA; its binding is stimulated by other ribosomal proteins, e.g. L4, L17, and L20. It is important during the early stages of 50S assembly. It makes multiple contacts with different domains of the 23S rRNA in the assembled 50S subunit and ribosome. The globular domain of the protein is located near the polypeptide exit tunnel on the outside of the subunit, while an extended beta-hairpin is found that lines the wall of the exit tunnel in the center of the 70S ribosome. The polypeptide is Large ribosomal subunit protein uL22 (Bartonella henselae (strain ATCC 49882 / DSM 28221 / CCUG 30454 / Houston 1) (Rochalimaea henselae)).